Here is a 225-residue protein sequence, read N- to C-terminus: Cytidylate kinase (225 aa).

Residue 11–19 (GPAAAGKST) participates in ATP binding.

It belongs to the cytidylate kinase family. Type 1 subfamily.

The protein localises to the cytoplasm. It catalyses the reaction CMP + ATP = CDP + ADP. The catalysed reaction is dCMP + ATP = dCDP + ADP. The sequence is that of Cytidylate kinase from Bacillus cereus (strain G9842).